We begin with the raw amino-acid sequence, 227 residues long: Nodulation protein W (227 aa).

One can recognise a Response regulatory domain in the interval 21–135 (IVFVVEDDIS…ELLDAVVAAT (115 aa)). Position 70 is a 4-aspartylphosphate (aspartate 70). The HTH luxR-type domain maps to 151-216 (LKSLFETLSP…DLIRMSETLG (66 aa)). Residues 175-194 (NKQVAAELGLAEITVKIYRG) constitute a DNA-binding region (H-T-H motif).

Post-translationally, phosphorylated by NodV.

It is found in the cytoplasm. In terms of biological role, member of the two-component regulatory system NodV/NodW probably involved in the regulation of the transcription of genes involved in the nodulation process. In Bradyrhizobium diazoefficiens (strain JCM 10833 / BCRC 13528 / IAM 13628 / NBRC 14792 / USDA 110), this protein is Nodulation protein W (nodW).